The primary structure comprises 158 residues: Low molecular weight phosphotyrosine protein phosphatase (158 aa).

Ala2 is subject to N-acetylalanine. Cys13 (nucleophile) is an active-site residue. The active site involves Arg19. The active-site Proton donor is Asp130. Residues Tyr132 and Tyr133 each carry the phosphotyrosine modification.

The protein belongs to the low molecular weight phosphotyrosine protein phosphatase family. Interacts with EPHA2; dephosphorylates EPHA2. Interacts with EPHB1. Interacts with the SH3 domain of SPTAN1. In terms of processing, phosphorylated by LCK. Phosphorylation at Tyr-132 increases its phosphatase activity.

Its subcellular location is the cytoplasm. It carries out the reaction O-phospho-L-tyrosyl-[protein] + H2O = L-tyrosyl-[protein] + phosphate. The catalysed reaction is a phosphate monoester + H2O = an alcohol + phosphate. Inhibited by sulfhydryl reagents. In terms of biological role, acts on tyrosine phosphorylated proteins, low-MW aryl phosphates and natural and synthetic acyl phosphates with differences in substrate specificity between isoform 1 and isoform 2. The sequence is that of Low molecular weight phosphotyrosine protein phosphatase (ACP1) from Pongo abelii (Sumatran orangutan).